Here is a 208-residue protein sequence, read N- to C-terminus: Ribosomal RNA large subunit methyltransferase E (208 aa).

S-adenosyl-L-methionine contacts are provided by G63, W65, D83, D99, and D124. Catalysis depends on K164, which acts as the Proton acceptor.

It belongs to the class I-like SAM-binding methyltransferase superfamily. RNA methyltransferase RlmE family.

The protein resides in the cytoplasm. The enzyme catalyses uridine(2552) in 23S rRNA + S-adenosyl-L-methionine = 2'-O-methyluridine(2552) in 23S rRNA + S-adenosyl-L-homocysteine + H(+). Its function is as follows. Specifically methylates the uridine in position 2552 of 23S rRNA at the 2'-O position of the ribose in the fully assembled 50S ribosomal subunit. The polypeptide is Ribosomal RNA large subunit methyltransferase E (Salmonella arizonae (strain ATCC BAA-731 / CDC346-86 / RSK2980)).